The sequence spans 573 residues: BICD family-like cargo adapter 1 (573 aa).

Positions Glu67–Pro97 are disordered. Residues Arg68 to Gln77 are compositionally biased toward basic and acidic residues. A CC1 box motif is present at residues Ala113–Gly117. The stretch at Lys118–Arg376 forms a coiled coil. Residues Asp386–Ala412 are disordered. The segment covering Ser387 to Ser396 has biased composition (low complexity). Residues Leu440 to Arg525 are a coiled coil.

It belongs to the BICDR family. Part of a tripartite complex with dynein and dynactin, acts an adapter linking the dynein motor complex and dynactin. Interacts with KIF1C. Interacts with RAB6A and RAB6B; interaction is specific to Rab6.

The protein resides in the cytoplasm. It is found in the cytoskeleton. Its subcellular location is the microtubule organizing center. The protein localises to the centrosome. Acts as an adapter protein linking the dynein motor complex to various cargos and converts dynein from a non-processive to a highly processive motor in the presence of dynactin. Facilitates the interaction between dynein and dynactin and activates dynein processivity (the ability to move along a microtubule for a long distance without falling off the track). Predominantly recruits 2 dyneins, which increases both the force and speed of the microtubule motor. Component of secretory vesicle machinery in developing neurons that acts as a regulator of neurite outgrowth. Regulates the secretory vesicle transport by controlling the accumulation of Rab6-containing secretory vesicles in the pericentrosomal region restricting anterograde secretory transport during the early phase of neuronal differentiation, thereby inhibiting neuritogenesis. This chain is BICD family-like cargo adapter 1 (BICDL1), found in Homo sapiens (Human).